Reading from the N-terminus, the 605-residue chain is Elongation factor 4 (605 aa).

The tr-type G domain occupies 9–191 (DTIRNFCIIA…AIIKRVPAPV (183 aa)). GTP-binding positions include 21 to 26 (DHGKST) and 138 to 141 (NKID).

This sequence belongs to the TRAFAC class translation factor GTPase superfamily. Classic translation factor GTPase family. LepA subfamily.

The protein resides in the cell inner membrane. The catalysed reaction is GTP + H2O = GDP + phosphate + H(+). In terms of biological role, required for accurate and efficient protein synthesis under certain stress conditions. May act as a fidelity factor of the translation reaction, by catalyzing a one-codon backward translocation of tRNAs on improperly translocated ribosomes. Back-translocation proceeds from a post-translocation (POST) complex to a pre-translocation (PRE) complex, thus giving elongation factor G a second chance to translocate the tRNAs correctly. Binds to ribosomes in a GTP-dependent manner. This chain is Elongation factor 4, found in Chlorobium phaeobacteroides (strain BS1).